The chain runs to 1293 residues: Enterobactin synthase component F (1293 aa).

The segment at 1–301 (MSQHLPLVAA…NVLPLGIHIA (301 aa)) is elongation/condensation. Residues 482–887 (SYREMREQVV…ALPDVEQAVT (406 aa)) are adenylation. In terms of domain architecture, Carrier spans 971-1046 (APKAGSETII…KLATIIDGEE (76 aa)). Residue Ser-1006 is modified to O-(pantetheine 4'-phosphoryl)serine. Residues 1066–1293 (PTLFCFHPAS…GPIIRATLNR (228 aa)) form a thioesterase region. The Proton acceptor; for thioesterase activity role is filled by His-1271.

It belongs to the ATP-dependent AMP-binding enzyme family. EntF subfamily. As to quaternary structure, proteins EntB, EntD, EntE and EntF are the component of the enterobactin synthase. Components probably do not form a stable complex. EntF acts as a catalytic monomer. It depends on pantetheine 4'-phosphate as a cofactor. Post-translationally, 4'-phosphopantetheine is transferred from CoA to a specific serine of apo-EntF by EntD. Holo-EntF so formed is then acylated with seryl-AMP.

The protein resides in the cytoplasm. The enzyme catalyses 3 2,3-dihydroxybenzoate + 3 L-serine + 6 ATP = enterobactin + 6 AMP + 6 diphosphate + 4 H(+). It catalyses the reaction holo-[peptidyl-carrier protein] + L-serine + ATP = L-seryl-[peptidyl-carrier protein] + AMP + diphosphate. It participates in siderophore biosynthesis; enterobactin biosynthesis. Involved in the biosynthesis of the siderophore enterobactin (enterochelin), which is a macrocyclic trimeric lactone of N-(2,3-dihydroxybenzoyl)-serine. EntF catalyzes the activation of L-serine via ATP-dependent PPi exchange reaction to form seryladenylate. Activated L-serine is loaded onto the peptidyl carrier domain via a thioester linkage to the phosphopanthetheine moiety, forming seryl-S-Ppant-EntF. EntF acts then as the sole catalyst for the formation of the three amide and three ester linkages found in enterobactin, using seryladenylate and 2,3-dihydroxybenzoate-S-Ppant-EntB (DHB-S-Ppant-EntB) as substrates, via the formation of a DHB-Ser-S-Ppant-EntF intermediate. This Escherichia coli O157:H7 protein is Enterobactin synthase component F (entF).